A 619-amino-acid chain; its full sequence is Dihydroxy-acid dehydratase (619 aa).

Asp-81 is a binding site for Mg(2+). [2Fe-2S] cluster is bound at residue Cys-122. Residues Asp-123 and Lys-124 each contribute to the Mg(2+) site. Lys-124 carries the N6-carboxylysine modification. Cys-195 is a binding site for [2Fe-2S] cluster. Glu-491 contacts Mg(2+). The Proton acceptor role is filled by Ser-517.

This sequence belongs to the IlvD/Edd family. Homodimer. It depends on [2Fe-2S] cluster as a cofactor. Mg(2+) is required as a cofactor.

The enzyme catalyses (2R)-2,3-dihydroxy-3-methylbutanoate = 3-methyl-2-oxobutanoate + H2O. It catalyses the reaction (2R,3R)-2,3-dihydroxy-3-methylpentanoate = (S)-3-methyl-2-oxopentanoate + H2O. It participates in amino-acid biosynthesis; L-isoleucine biosynthesis; L-isoleucine from 2-oxobutanoate: step 3/4. The protein operates within amino-acid biosynthesis; L-valine biosynthesis; L-valine from pyruvate: step 3/4. Functions in the biosynthesis of branched-chain amino acids. Catalyzes the dehydration of (2R,3R)-2,3-dihydroxy-3-methylpentanoate (2,3-dihydroxy-3-methylvalerate) into 2-oxo-3-methylpentanoate (2-oxo-3-methylvalerate) and of (2R)-2,3-dihydroxy-3-methylbutanoate (2,3-dihydroxyisovalerate) into 2-oxo-3-methylbutanoate (2-oxoisovalerate), the penultimate precursor to L-isoleucine and L-valine, respectively. The chain is Dihydroxy-acid dehydratase from Sphingopyxis alaskensis (strain DSM 13593 / LMG 18877 / RB2256) (Sphingomonas alaskensis).